The following is a 250-amino-acid chain: UPF0494 membrane protein PB2B2.07c (250 aa).

3 helical membrane passes run 98-118 (WPLLIIWCILIVFAIDKNFEV), 144-164 (IAIYICLFILLLLGLICMFPL), and 179-199 (MIIAVLGAALGMIIAALGATI).

The protein belongs to the UPF0494 family.

Its subcellular location is the cytoplasm. It localises to the endoplasmic reticulum. The protein localises to the golgi apparatus. The protein resides in the membrane. The polypeptide is UPF0494 membrane protein PB2B2.07c (Schizosaccharomyces pombe (strain 972 / ATCC 24843) (Fission yeast)).